The primary structure comprises 61 residues: Large ribosomal subunit protein uL30 (61 aa).

Belongs to the universal ribosomal protein uL30 family. In terms of assembly, part of the 50S ribosomal subunit.

The polypeptide is Large ribosomal subunit protein uL30 (Shewanella halifaxensis (strain HAW-EB4)).